Reading from the N-terminus, the 226-residue chain is ATP synthase F(0) complex subunit a (226 aa).

Transmembrane regions (helical) follow at residues 6–26 (FASF…IIMF), 68–88 (WALM…LGLL), 97–117 (QLSM…ILGF), 138–158 (IPML…ALAV), 164–184 (ITAG…LMDI), and 189–209 (ATIT…VALI).

Belongs to the ATPase A chain family. As to quaternary structure, component of the ATP synthase complex composed at least of ATP5F1A/subunit alpha, ATP5F1B/subunit beta, ATP5MC1/subunit c (homooctomer), MT-ATP6/subunit a, MT-ATP8/subunit 8, ATP5ME/subunit e, ATP5MF/subunit f, ATP5MG/subunit g, ATP5MK/subunit k, ATP5MJ/subunit j, ATP5F1C/subunit gamma, ATP5F1D/subunit delta, ATP5F1E/subunit epsilon, ATP5PF/subunit F6, ATP5PB/subunit b, ATP5PD/subunit d, ATP5PO/subunit OSCP. ATP synthase complex consists of a soluble F(1) head domain (subunits alpha(3) and beta(3)) - the catalytic core - and a membrane F(0) domain - the membrane proton channel (subunits c, a, 8, e, f, g, k and j). These two domains are linked by a central stalk (subunits gamma, delta, and epsilon) rotating inside the F1 region and a stationary peripheral stalk (subunits F6, b, d, and OSCP). Interacts with DNAJC30; interaction is direct.

It is found in the mitochondrion inner membrane. The enzyme catalyses H(+)(in) = H(+)(out). Functionally, subunit a, of the mitochondrial membrane ATP synthase complex (F(1)F(0) ATP synthase or Complex V) that produces ATP from ADP in the presence of a proton gradient across the membrane which is generated by electron transport complexes of the respiratory chain. ATP synthase complex consist of a soluble F(1) head domain - the catalytic core - and a membrane F(1) domain - the membrane proton channel. These two domains are linked by a central stalk rotating inside the F(1) region and a stationary peripheral stalk. During catalysis, ATP synthesis in the catalytic domain of F(1) is coupled via a rotary mechanism of the central stalk subunits to proton translocation. With the subunit c (ATP5MC1), forms the proton-conducting channel in the F(0) domain, that contains two crucial half-channels (inlet and outlet) that facilitate proton movement from the mitochondrial intermembrane space (IMS) into the matrix. Protons are taken up via the inlet half-channel and released through the outlet half-channel, following a Grotthuss mechanism. This chain is ATP synthase F(0) complex subunit a, found in Rattus norvegicus (Rat).